A 567-amino-acid chain; its full sequence is Malate synthase, glyoxysomal (567 aa).

R182 functions as the Proton acceptor in the catalytic mechanism. D468 serves as the catalytic Proton donor. Positions 565–567 match the Microbody targeting signal motif; that stretch reads SRL.

This sequence belongs to the malate synthase family.

It localises to the glyoxysome. It catalyses the reaction glyoxylate + acetyl-CoA + H2O = (S)-malate + CoA + H(+). The protein operates within carbohydrate metabolism; glyoxylate cycle; (S)-malate from isocitrate: step 2/2. The polypeptide is Malate synthase, glyoxysomal (Ricinus communis (Castor bean)).